Consider the following 221-residue polypeptide: Putative 5'(3')-deoxyribonucleotidase R824 (221 aa).

Mg(2+) is bound by residues aspartate 16 and aspartate 18. The active-site Nucleophile is the aspartate 18. Phosphate contacts are provided by aspartate 18, serine 103, and lysine 138. Aspartate 149 is a binding site for Mg(2+).

This sequence belongs to the 5'(3')-deoxyribonucleotidase family. Mg(2+) serves as cofactor.

In terms of biological role, dephosphorylates the 5' and 2'(3')-phosphates of deoxyribonucleotides. The polypeptide is Putative 5'(3')-deoxyribonucleotidase R824 (Acanthamoeba polyphaga mimivirus (APMV)).